The chain runs to 492 residues: Bifunctional shikimate kinase/3-dehydroquinate synthase (492 aa).

Residues 1–161 are shikimate kinase; that stretch reads MRIFLVGMMG…TALVVLEALD (161 aa). Residue 10-15 participates in ATP binding; sequence GSGKST. Ser-14 lines the Mg(2+) pocket. Positions 32, 56, and 78 each coordinate substrate. Arg-114 contacts ATP. Arg-131 is a binding site for substrate. Positions 162–492 are 3-dehydroquinate synthase; that stretch reads EKEISTIEKP…DPLELLEVVD (331 aa).

This sequence in the N-terminal section; belongs to the shikimate kinase family. In the C-terminal section; belongs to the sugar phosphate cyclases superfamily. Dehydroquinate synthase family. Mg(2+) is required as a cofactor. Requires NAD(+) as cofactor. The cofactor is a divalent metal cation.

It localises to the cytoplasm. It carries out the reaction 7-phospho-2-dehydro-3-deoxy-D-arabino-heptonate = 3-dehydroquinate + phosphate. It catalyses the reaction shikimate + ATP = 3-phosphoshikimate + ADP + H(+). Its pathway is metabolic intermediate biosynthesis; chorismate biosynthesis; chorismate from D-erythrose 4-phosphate and phosphoenolpyruvate: step 2/7. It participates in metabolic intermediate biosynthesis; chorismate biosynthesis; chorismate from D-erythrose 4-phosphate and phosphoenolpyruvate: step 5/7. Catalyzes the specific phosphorylation of the 3-hydroxyl group of shikimic acid using ATP as a cosubstrate. The polypeptide is Bifunctional shikimate kinase/3-dehydroquinate synthase (aroKB) (Thermotoga maritima (strain ATCC 43589 / DSM 3109 / JCM 10099 / NBRC 100826 / MSB8)).